We begin with the raw amino-acid sequence, 225 residues long: UPF0758 protein XOO0462 (225 aa).

Residues 102–224 enclose the MPN domain; sequence ALSDPPSVGR…PVSLAERGWL (123 aa). Zn(2+)-binding residues include H173, H175, and D186. A JAMM motif motif is present at residues 173–186; it reads HNHPSGNPEPSEAD.

This sequence belongs to the UPF0758 family.

This Xanthomonas oryzae pv. oryzae (strain MAFF 311018) protein is UPF0758 protein XOO0462.